We begin with the raw amino-acid sequence, 243 residues long: MSTCPFNDVFNSTDSSMINTFLKNVQVLLEAASYIESAERKDGKCEHGYASTFPSIQHSSYQRQRKFRNKKCNNNHYRSTHNELEKNRRAHLRLCLERLKTLIPLGPECSRHTTLGLLNKAKAHIKKLEEADRKSRYQLESLEREQRHLRRRLDLLRDGGGSLEAERIRTDSMGSTPCSERSDRSDSDQEEMEVDVESTEFSHGELDSVSTASTSDLDDHSSLQSTASDEGYSSCSIKLAFSS.

Positions 76 to 128 (HYRSTHNELEKNRRAHLRLCLERLKTLIPLGPECSRHTTLGLLNKAKAHIKKL) constitute a bHLH domain. The interval 164–235 (EAERIRTDSM…TASDEGYSSC (72 aa)) is disordered. Over residues 188–198 (DQEEMEVDVES) the composition is skewed to acidic residues. The segment covering 222 to 235 (SLQSTASDEGYSSC) has biased composition (polar residues).

As to quaternary structure, efficient DNA binding requires dimerization with another bHLH protein. Binds DNA as a heterodimer with MAX.

Its subcellular location is the nucleus. Its function is as follows. Transcriptional repressor. MXI1 binds with MAX to form a sequence-specific DNA-binding protein complex which recognizes the core sequence 5'-CAC[GA]TG-3'. MXI1 thus antagonizes MYC transcriptional activity by competing for MAX. The polypeptide is Max-interacting protein 1 (mxi1) (Danio rerio (Zebrafish)).